Reading from the N-terminus, the 1226-residue chain is DNA-directed RNA polymerase subunit beta (1226 aa).

The protein belongs to the RNA polymerase beta chain family. In terms of assembly, the RNAP catalytic core consists of 2 alpha, 1 beta, 1 beta' and 1 omega subunit. When a sigma factor is associated with the core the holoenzyme is formed, which can initiate transcription.

The enzyme catalyses RNA(n) + a ribonucleoside 5'-triphosphate = RNA(n+1) + diphosphate. DNA-dependent RNA polymerase catalyzes the transcription of DNA into RNA using the four ribonucleoside triphosphates as substrates. The chain is DNA-directed RNA polymerase subunit beta from Leptospira interrogans serogroup Icterohaemorrhagiae serovar copenhageni (strain Fiocruz L1-130).